Reading from the N-terminus, the 456-residue chain is MFNMKILVIPLFWGLVTGYKGNSSDSSAPRLLLVSFDGFRADYLKSYDLPHLQNFIKEGVLVEHVKNVFITKTFPNHYSIVTGLYEESHGIVANSMYDSVTKKHFSESNDKDPFWWNGAEPIWVTNQLQENRSSAAAMWPGTDVPIHNITASYFMNYSSSVSFKERLGNVTTWLSSSNPPVTFAALYWEEPDVSGHKYGPEDKENMRRVLKEVDDLIGDIVLKLKVLGLWDSLNVIITSDHGMAQCSKNRLIDLDSCIDRSNYSVIDLTPVAAILPKINVTEVYDKLKRCNPHMNVYLKEAIPNRFYYQHSSRIQPIILVAEEGWTITLNKSSFKLGDHGYDNSLPSMHPFLAAHGPAFRKGYRQSTINTVDIYPMMCHILGLKPHPNNGTLSHTKCLLVDQWCINLPEAIGIVVSALLVLTMLTGLMIFMRSRASTSRPFSRLQLQEDDDDPLID.

A signal peptide spans 1 to 18; sequence MFNMKILVIPLFWGLVTG. Over 19 to 410 the chain is Extracellular; it reads YKGNSSDSSA…DQWCINLPEA (392 aa). Zn(2+) is bound by residues Asp37 and Thr73. The AMP-threonine intermediate role is filled by Thr73. Residue Asn94 coordinates substrate. Asn148 carries N-linked (GlcNAc...) asparagine glycosylation. Tyr157 serves as a coordination point for substrate. Asn169 is a glycosylation site (N-linked (GlcNAc...) asparagine). Zn(2+) contacts are provided by Asp192, His196, Asp240, and His241. Asp192 is a substrate binding site. Cys257 and Cys290 are joined by a disulfide. Asn279 and Asn330 each carry an N-linked (GlcNAc...) asparagine glycan. His339 is a binding site for Zn(2+). Asn389 carries N-linked (GlcNAc...) asparagine glycosylation. A disulfide bond links Cys397 and Cys404. The helical transmembrane segment at 411–431 threads the bilayer; sequence IGIVVSALLVLTMLTGLMIFM. Topologically, residues 432–456 are cytoplasmic; sequence RSRASTSRPFSRLQLQEDDDDPLID.

It belongs to the nucleotide pyrophosphatase/phosphodiesterase family. Requires Zn(2+) as cofactor.

It is found in the cell membrane. It carries out the reaction P(1),P(3)-bis(5'-adenosyl) triphosphate + H2O = AMP + ADP + 2 H(+). Hydrolyzes extracellular Ap3A into AMP and ADP, and Ap4A into AMP and ATP. Ap3A and Ap4A are diadenosine polyphosphates thought to induce proliferation of vascular smooth muscle cells. Acts as a procoagulant, mediating platelet aggregation at the site of nascent thrombus via release of ADP from Ap3A and activation of ADP receptors. The protein is Bis(5'-adenosyl)-triphosphatase enpp4 (Enpp4) of Mus musculus (Mouse).